Reading from the N-terminus, the 537-residue chain is Intercellular adhesion molecule 1 (537 aa).

The signal sequence occupies residues 1–27; it reads MASTRAKPTLPLLLALVTVVIPGPGDA. The Extracellular segment spans residues 28–485; that stretch reads QVSIHPREAF…LTVLYHSQNN (458 aa). Ig-like C2-type domains lie at 41–102 and 127–195; these read GGSV…QSSA and GKDL…LDLR. The N-linked (GlcNAc...) asparagine glycan is linked to Asn-47. 3 disulfides stabilise this stretch: Cys-48/Cys-91, Cys-52/Cys-95, and Cys-134/Cys-188. Positions 151–153 match the Cell attachment site; atypical motif; sequence RGE. The Cell attachment site signature appears at 179–181; the sequence is RGD. Asn-185, Asn-204, Asn-267, Asn-311, Asn-362, Asn-388, Asn-409, Asn-456, and Asn-469 each carry an N-linked (GlcNAc...) asparagine glycan. Residues 232-299 form the Ig-like C2-type 3 domain; the sequence is GTQQKLFCSL…LRCVLELADQ (68 aa). A disulfide bridge links Cys-239 with Cys-292. One can recognise an Ig-like C2-type 4 domain in the interval 327–381; it reads GSQVTVKCEAHSGSKVVLLSGVEPRPPTPQVQFTLNASSEDHKRSFFCSAALEVA. Residues Cys-334 and Cys-374 are joined by a disulfide bond. Disulfide bonds link Cys-406-Cys-422, Cys-422-Cys-461, and Cys-434-Cys-461. An Ig-like C2-type 5 domain is found at 415 to 468; the sequence is GSQQTLKCQAWGNPSPKMTCRRKADGALLPIGVVKSVKQEMNGTYVCHAFSSHG. A helical membrane pass occupies residues 486–509; the sequence is WTIIILVPVLLVIVGLVMAASYVY. Over 510–537 the chain is Cytoplasmic; that stretch reads NRQRKIRIYKLQKAQEEAIKLKGQAPPP.

Belongs to the immunoglobulin superfamily. ICAM family. In terms of assembly, homodimer. Interacts with MUC1 and promotes cell aggregation in epithelial cells. Interacts with ARHGEF26/SGEF. Interacts (on T cell side) with CD81, CD247 and CD9 at immunological synapses between antigen-presenting cells and T cells. Monoubiquitinated, which is promoted by MARCH9 and leads to endocytosis. Expressed at low level on a subpopulation of lymphocytes, macrophages, and endothelial cells, but is strongly induced on these cells, and on fibroblasts and epithelial cells.

The protein resides in the membrane. Functionally, ICAM proteins are ligands for the leukocyte adhesion protein LFA-1 (integrin alpha-L/beta-2). During leukocyte trans-endothelial migration, ICAM1 engagement promotes the assembly of endothelial apical cups through ARHGEF26/SGEF and RHOG activation. This Mus musculus (Mouse) protein is Intercellular adhesion molecule 1 (Icam1).